Here is a 335-residue protein sequence, read N- to C-terminus: Tetraacyldisaccharide 4'-kinase (335 aa).

58–65 (TVGGSGKT) lines the ATP pocket.

It belongs to the LpxK family.

The enzyme catalyses a lipid A disaccharide + ATP = a lipid IVA + ADP + H(+). The protein operates within glycolipid biosynthesis; lipid IV(A) biosynthesis; lipid IV(A) from (3R)-3-hydroxytetradecanoyl-[acyl-carrier-protein] and UDP-N-acetyl-alpha-D-glucosamine: step 6/6. In terms of biological role, transfers the gamma-phosphate of ATP to the 4'-position of a tetraacyldisaccharide 1-phosphate intermediate (termed DS-1-P) to form tetraacyldisaccharide 1,4'-bis-phosphate (lipid IVA). This Shewanella sp. (strain MR-7) protein is Tetraacyldisaccharide 4'-kinase.